Reading from the N-terminus, the 31-residue chain is GTIPCGESCVYIPCITSALGCSCKKKVCYKN.

Positions 1–31 (GTIPCGESCVYIPCITSALGCSCKKKVCYKN) form a cross-link, cyclopeptide (Gly-Asn). 3 disulfides stabilise this stretch: C5/C21, C9/C23, and C14/C28.

It belongs to the cyclotide family. Bracelet subfamily. This is a cyclic peptide.

Functionally, probably participates in a plant defense mechanism. In Melicytus dentatus (Tree violet), this protein is Cyclotide mden-M.